Reading from the N-terminus, the 336-residue chain is GTP 3',8-cyclase (336 aa).

One can recognise a Radical SAM core domain in the interval 17–238 (GFSRRFHYLR…WTQQNRNLTD (222 aa)). GTP is bound at residue R26. Residues C33 and C37 each coordinate [4Fe-4S] cluster. Y39 serves as a coordination point for S-adenosyl-L-methionine. C40 contacts [4Fe-4S] cluster. GTP is bound at residue R75. Residue G79 coordinates S-adenosyl-L-methionine. T106 lines the GTP pocket. S130 is a binding site for S-adenosyl-L-methionine. Residue K167 participates in GTP binding. M201 provides a ligand contact to S-adenosyl-L-methionine. [4Fe-4S] cluster-binding residues include C264 and C267. 269-271 (RLR) provides a ligand contact to GTP. C281 is a binding site for [4Fe-4S] cluster.

Belongs to the radical SAM superfamily. MoaA family. Monomer and homodimer. The cofactor is [4Fe-4S] cluster.

The catalysed reaction is GTP + AH2 + S-adenosyl-L-methionine = (8S)-3',8-cyclo-7,8-dihydroguanosine 5'-triphosphate + 5'-deoxyadenosine + L-methionine + A + H(+). Its pathway is cofactor biosynthesis; molybdopterin biosynthesis. Functionally, catalyzes the cyclization of GTP to (8S)-3',8-cyclo-7,8-dihydroguanosine 5'-triphosphate. In Tolumonas auensis (strain DSM 9187 / NBRC 110442 / TA 4), this protein is GTP 3',8-cyclase.